The sequence spans 233 residues: Large ribosomal subunit protein uL1 (233 aa).

This sequence belongs to the universal ribosomal protein uL1 family. Part of the 50S ribosomal subunit.

Functionally, binds directly to 23S rRNA. The L1 stalk is quite mobile in the ribosome, and is involved in E site tRNA release. Its function is as follows. Protein L1 is also a translational repressor protein, it controls the translation of the L11 operon by binding to its mRNA. The protein is Large ribosomal subunit protein uL1 of Polynucleobacter asymbioticus (strain DSM 18221 / CIP 109841 / QLW-P1DMWA-1) (Polynucleobacter necessarius subsp. asymbioticus).